A 272-amino-acid chain; its full sequence is MKVIMTTKTDLASMNIMEKLVENFGFKETDRLFDGNPVYSKGDTLILTTNDEMIYYDNLDKAIEHQLGLVPEIIVFASRHSSKQKLPALTTHITGNWGNAMYGGKDESLAIAQPSAMKLALLKMNELNDLNWIICYEATHHGPSELNVPSLFIEIGSSEEEWVNDRAGDILAETITYVLDKYRETKFPVAIGIGGGHYAPKQTKRALETDLAFSHIAPKYVHPLKKELILKAIERTAEKVDAIYVDWKGSKGETRQMAKALAEELGLEFIRD.

The protein belongs to the DtdA deacylase family. As to quaternary structure, monomer. It depends on Zn(2+) as a cofactor.

The catalysed reaction is a D-aminoacyl-tRNA + H2O = a tRNA + a D-alpha-amino acid + H(+). The enzyme catalyses glycyl-tRNA(Ala) + H2O = tRNA(Ala) + glycine + H(+). Functionally, D-aminoacyl-tRNA deacylase with broad substrate specificity. By recycling D-aminoacyl-tRNA to D-amino acids and free tRNA molecules, this enzyme counteracts the toxicity associated with the formation of D-aminoacyl-tRNA entities in vivo. The chain is D-aminoacyl-tRNA deacylase from Thermococcus onnurineus (strain NA1).